The primary structure comprises 480 residues: Cysteine--tRNA ligase (480 aa).

Cysteine 27 is a binding site for Zn(2+). Residues 29–39 (PTVYNYAHIGN) carry the 'HIGH' region motif. Residues cysteine 221, histidine 246, and glutamate 250 each contribute to the Zn(2+) site. The 'KMSKS' region motif lies at 278-282 (KMSKS). Lysine 281 is an ATP binding site.

Belongs to the class-I aminoacyl-tRNA synthetase family. In terms of assembly, monomer. Zn(2+) serves as cofactor.

It is found in the cytoplasm. The catalysed reaction is tRNA(Cys) + L-cysteine + ATP = L-cysteinyl-tRNA(Cys) + AMP + diphosphate. In Borreliella burgdorferi (strain ZS7) (Borrelia burgdorferi), this protein is Cysteine--tRNA ligase.